Consider the following 214-residue polypeptide: Large ribosomal subunit protein uL6m (214 aa).

Residues 1–16 (MSFIQRRLLSQTLFLR) constitute a mitochondrion transit peptide.

Belongs to the universal ribosomal protein uL6 family. Component of the mitochondrial large ribosomal subunit (mt-LSU). Mature yeast 74S mitochondrial ribosomes consist of a small (37S) and a large (54S) subunit. The 37S small subunit contains a 15S ribosomal RNA (15S mt-rRNA) and 34 different proteins. The 54S large subunit contains a 21S rRNA (21S mt-rRNA) and 46 different proteins.

The protein resides in the mitochondrion. Functionally, component of the mitochondrial ribosome (mitoribosome), a dedicated translation machinery responsible for the synthesis of mitochondrial genome-encoded proteins, including at least some of the essential transmembrane subunits of the mitochondrial respiratory chain. The mitoribosomes are attached to the mitochondrial inner membrane and translation products are cotranslationally integrated into the membrane. This Saccharomyces cerevisiae (strain ATCC 204508 / S288c) (Baker's yeast) protein is Large ribosomal subunit protein uL6m (MRPL6).